We begin with the raw amino-acid sequence, 166 residues long: T-cell surface glycoprotein CD3 zeta chain (166 aa).

Positions 1–21 (MKWTALVIVAVLQTQFPVTAA) are cleaved as a signal peptide. At 22-30 (QSFGLLDPK) the chain is on the extracellular side. The chain crosses the membrane as a helical span at residues 31-51 (LCYLLDGILFIYGVIVTALFL). The Cytoplasmic portion of the chain corresponds to 52–166 (RAKFSRSADA…ALHMQALPPR (115 aa)). A Phosphoserine modification is found at S58. ITAM domains lie at 61–89 (APAYQHGQNPVYNELNVGRREEYAVLDRR), 100–128 (PQRKKNPHEVVYNELRKDKMAEAYSEIGM), and 133–161 (QRRRGKGHDGVYQGLSTATKDTYDALHMQ). Residues Y64, Y72, Y83, Y111, Y123, Y144, and Y155 each carry the phosphotyrosine modification. The disordered stretch occupies residues 126-156 (IGMKSDNQRRRGKGHDGVYQGLSTATKDTYD).

This sequence belongs to the CD3Z/FCER1G family. The TCR-CD3 complex is composed of a CD3D/CD3E and a CD3G/CD3E heterodimers that preferentially associate with TCRalpha and TCRbeta, respectively, to form TCRalpha/CD3E/CD3G and TCRbeta/CD3G/CD3E trimers. In turn, the hexamer interacts with CD3Z homodimer to form the TCR-CD3 complex. Alternatively, TCRalpha and TCRbeta can be replaced by TCRgamma and TCRdelta. Interacts with SLA. Interacts with TRAT1. Interacts with DOCK2. Interacts with SLA2. Interacts with SHB. Interacts with ZAP70. Interacts (tyrosine phosphorylated) with SHC1 (via SH2 domain). Interacts with PTPRC. Interacts with CRK; this interaction regulates CD3Z phosphorylation. Interacts (on T cell side) with CD81, ICAM1 and CD9 at immunological synapses between antigen-presenting cells and T cells. Interacts with CD160. Interacts with LY6E. Interacts with LY6E. The signaling subunit of immunoglobulin gamma (IgG) Fc receptor complex. As a homodimer or a heterodimer with FCER1G, associates with the ligand binding subunit FCGR3A (via transmembrane domain); this interaction is a prerequisite for Fc receptor complex expression on the cell surface. Interacts with CD5. Phosphorylated on Tyr residues after T-cell receptor triggering by LCK in association with CD4/CD8.

The protein resides in the cell membrane. Functionally, part of the TCR-CD3 complex present on T-lymphocyte cell surface that plays an essential role in adaptive immune response. When antigen presenting cells (APCs) activate T-cell receptor (TCR), TCR-mediated signals are transmitted across the cell membrane by the CD3 chains CD3D, CD3E, CD3G and CD3Z. All CD3 chains contain immunoreceptor tyrosine-based activation motifs (ITAMs) in their cytoplasmic domain. Upon TCR engagement, these motifs become phosphorylated by Src family protein tyrosine kinases LCK and FYN, resulting in the activation of downstream signaling pathways. CD3Z ITAMs phosphorylation creates multiple docking sites for the protein kinase ZAP70 leading to ZAP70 phosphorylation and its conversion into a catalytically active enzyme. Plays an important role in intrathymic T-cell differentiation. Additionally, participates in the activity-dependent synapse formation of retinal ganglion cells (RGCs) in both the retina and dorsal lateral geniculate nucleus (dLGN). This chain is T-cell surface glycoprotein CD3 zeta chain (CD247), found in Ovis aries (Sheep).